Here is a 222-residue protein sequence, read N- to C-terminus: Charged multivesicular body protein 2a (222 aa).

At Met-1 the chain carries N-acetylmethionine. A coiled-coil region spans residues 12–53 (EELLRQNQRALNRAMRELDRERQKLETQEKKIIADIKKMAKQ). Positions 56 to 222 (MDAVRIMAKD…EERLKNLRRD (167 aa)) are interaction with VPS4B. The span at 179-188 (LSNLPSTGGS) shows a compositional bias: polar residues. Residues 179–198 (LSNLPSTGGSLSVAAGGKKA) are disordered. Ser-184 carries the phosphoserine modification. The residue at position 185 (Thr-185) is a Phosphothreonine. Ser-188, Ser-190, and Ser-203 each carry phosphoserine. Positions 195–222 (GKKAEATASALADADADLEERLKNLRRD) form a coiled coil. An MIT-interacting motif motif is present at residues 210–220 (ADLEERLKNLR). The segment at 217–222 (KNLRRD) is interaction with VTA1.

This sequence belongs to the SNF7 family. In terms of assembly, probable core component of the endosomal sorting required for transport complex III (ESCRT-III). ESCRT-III components are thought to multimerize to form a flat lattice on the perimeter membrane of the endosome. Several assembly forms of ESCRT-III may exist that interact and act sequentially. In vitro, heteromerizes with CHMP3 (but not CHMP4) to form helical tubular structures that expose membrane-interacting sites on the outside whereas VPS4B can associate on the inside of the tubule. Interacts with CHMP1B, CHMP2B, CHMP3, CHMP4A, CHMP4B, CHMP4C and CHMP5. Interacts with VPS4A; the interaction is direct. Interacts with VPS4B; the interaction is direct. Interacts with MITD1. Interacts with VTA1; the interaction probably involves the open conformation of CHMP2A. In terms of processing, ISGylated in a CHMP5-dependent manner. Isgylation weakens and inhibits its interactions with VPS4A and VTA1 respectively. As to expression, widely expressed. Highly expressed in brain, heart, liver and kidney.

It localises to the late endosome membrane. Its subcellular location is the cytoplasm. The protein localises to the nucleus envelope. In terms of biological role, probable core component of the endosomal sorting required for transport complex III (ESCRT-III) which is involved in multivesicular bodies (MVBs) formation and sorting of endosomal cargo proteins into MVBs. MVBs contain intraluminal vesicles (ILVs) that are generated by invagination and scission from the limiting membrane of the endosome and mostly are delivered to lysosomes enabling degradation of membrane proteins, such as stimulated growth factor receptors, lysosomal enzymes and lipids. The MVB pathway appears to require the sequential function of ESCRT-O, -I,-II and -III complexes. ESCRT-III proteins mostly dissociate from the invaginating membrane before the ILV is released. The ESCRT machinery also functions in topologically equivalent membrane fission events, such as the terminal stages of cytokinesis. Together with SPAST, the ESCRT-III complex promotes nuclear envelope sealing and mitotic spindle disassembly during late anaphase. Recruited to the reforming nuclear envelope (NE) during anaphase by LEMD2. ESCRT-III proteins are believed to mediate the necessary vesicle extrusion and/or membrane fission activities, possibly in conjunction with the AAA ATPase VPS4. This Mus musculus (Mouse) protein is Charged multivesicular body protein 2a (Chmp2a).